A 422-amino-acid chain; its full sequence is Ubiquitin-conjugating enzyme E2 Q1 (422 aa).

At M1 the chain carries N-acetylmethionine. Residues 1–24 show a composition bias toward low complexity; sequence MQQPQPQGQQQPGPGQQLGVQGAA. Disordered stretches follow at residues 1-40 and 173-221; these read MQQPQPQGQQQPGPGQQLGVQGAAPGAGGGPGGGPGPGPC and QPLP…EDDG. The span at 25-35 shows a compositional bias: gly residues; it reads PGAGGGPGGGP. The span at 185-200 shows a compositional bias: acidic residues; the sequence is VSSEDEDEEMPEDTED. Basic and acidic residues predominate over residues 212 to 221; it reads AEGKKSEDDG. The UBC core domain maps to 251–415; sequence QATDRLMKEL…VQIHEKNGWY (165 aa). C351 serves as the catalytic Glycyl thioester intermediate.

It belongs to the ubiquitin-conjugating enzyme family. As to quaternary structure, monomer and homodimer. Only the homodimer is linked to ubiquitin through thiolester activation. Interacts (via N-terminus) with B4GALT1 (via N-terminal cytoplasmic domain); the interaction is direct. Post-translationally, autoubiquitinated in vitro in the presence of NEDD4L. As to expression, expressed in liver, brain, heart, spleen, lung, kidney, muscle, ovary, epididymis, testis and placenta. Also expressed in thymus and ES cells. Only expressed in the uterus during pregnancy. Expressed in oocytes and during subsequent embryonic development stages (4-cell stage, blastocyst, 8.5 dpc, 13.5 dpc, 16.5 dpc and 18.5 dpc).

It is found in the nucleus. The protein resides in the cell projection. It localises to the filopodium. The protein localises to the cytoplasm. Its subcellular location is the cytosol. The enzyme catalyses S-ubiquitinyl-[E1 ubiquitin-activating enzyme]-L-cysteine + [E2 ubiquitin-conjugating enzyme]-L-cysteine = [E1 ubiquitin-activating enzyme]-L-cysteine + S-ubiquitinyl-[E2 ubiquitin-conjugating enzyme]-L-cysteine.. It functions in the pathway protein modification; protein ubiquitination. In terms of biological role, catalyzes the covalent attachment of ubiquitin to other proteins. Involved in female fertility and embryo implantation. May be involved in hormonal homeostasis in females. Involved in regulation of B4GALT1 cell surface expression, B4GALT1-mediated cell adhesion to laminin and embryoid body formation. This chain is Ubiquitin-conjugating enzyme E2 Q1 (Ube2q1), found in Mus musculus (Mouse).